Here is a 190-residue protein sequence, read N- to C-terminus: Imidazoleglycerol-phosphate dehydratase (190 aa).

Belongs to the imidazoleglycerol-phosphate dehydratase family.

It localises to the cytoplasm. The catalysed reaction is D-erythro-1-(imidazol-4-yl)glycerol 3-phosphate = 3-(imidazol-4-yl)-2-oxopropyl phosphate + H2O. Its pathway is amino-acid biosynthesis; L-histidine biosynthesis; L-histidine from 5-phospho-alpha-D-ribose 1-diphosphate: step 6/9. The chain is Imidazoleglycerol-phosphate dehydratase from Sulfurovum sp. (strain NBC37-1).